The primary structure comprises 299 residues: F-actin-capping protein subunit alpha-3 (299 aa).

Serine 290 carries the post-translational modification Phosphoserine.

Belongs to the F-actin-capping protein alpha subunit family. Component of the F-actin capping complex, composed of a heterodimer of an alpha and a beta subunit. Component of the WASH complex, composed of F-actin-capping protein subunit alpha (CAPZA1, CAPZA2 or CAPZA3), F-actin-capping protein subunit beta (CAPZB), WASH (WASHC1, WASH2P, WASH3P, WASH4P, WASH5P or WASH6P), WASHC2 (WASHC2A or WASHC2C), WASHC3, WASHC4 and WASHC5. In terms of tissue distribution, expressed exclusively in testis and sperm. Highest expression is found in the neck region of ejaculated sperm with lower levels found in the tail and postacrosome region.

The protein resides in the cytoplasm. It is found in the cytoskeleton. In terms of biological role, F-actin-capping proteins bind in a Ca(2+)-independent manner to the fast growing ends of actin filaments (barbed end) thereby blocking the exchange of subunits at these ends. Unlike other capping proteins (such as gelsolin and severin), these proteins do not sever actin filaments. May play a role in the morphogenesis of spermatid. In Homo sapiens (Human), this protein is F-actin-capping protein subunit alpha-3 (CAPZA3).